A 138-amino-acid polypeptide reads, in one-letter code: Acidic phospholipase A2 inhibitor chain HPD-1I (138 aa).

A signal peptide spans 1 to 16 (MRTLWIVAVCLIGVEG). Cystine bridges form between C42/C131, C44/C60, C59/C111, C65/C138, C66/C104, C73/C97, and C91/C102.

In terms of assembly, heterodimer of an acidic and a basic chain; non-covalently linked. The basic chain is toxic and has phospholipase A2 activity (chain HDP-1P (AC Q1RP79) or HDP-2P (AC Q1RP78)) and the acidic chain is non-toxic and functions as its inhibitor (chain HPD-1I). Expressed by the venom gland.

The protein localises to the secreted. In terms of biological role, heterodimer: slightly affects neuromuscular transmission acting presynaptically. It has a low catalytic activity, a low anticoagulant activity and weakly inhibits ADP-induced platelet aggregation. Monomer: has no activity (neurotoxic, catalytic, anticoagulant and a ADP-induced platelet aggregation), but inhibits phospholipase A2. This chain is Acidic phospholipase A2 inhibitor chain HPD-1I, found in Vipera nikolskii (Nikolsky's adder).